The chain runs to 402 residues: tRNA(Met) cytidine acetate ligase (402 aa).

ATP contacts are provided by residues 7–20 (ITEY…HELH), glycine 102, asparagine 171, and arginine 196.

It belongs to the TmcAL family.

The protein resides in the cytoplasm. The catalysed reaction is cytidine(34) in elongator tRNA(Met) + acetate + ATP = N(4)-acetylcytidine(34) in elongator tRNA(Met) + AMP + diphosphate. Catalyzes the formation of N(4)-acetylcytidine (ac(4)C) at the wobble position of elongator tRNA(Met), using acetate and ATP as substrates. First activates an acetate ion to form acetyladenylate (Ac-AMP) and then transfers the acetyl group to tRNA to form ac(4)C34. This is tRNA(Met) cytidine acetate ligase from Clostridium perfringens (strain SM101 / Type A).